Reading from the N-terminus, the 655-residue chain is Very long-chain specific acyl-CoA dehydrogenase, mitochondrial (655 aa).

A mitochondrion-targeting transit peptide spans M1–Y40. The disordered stretch occupies residues S22–A66. The tract at residues A41–K482 is catalytic. A compositionally biased stretch (polar residues) spans V49 to A59. N6-acetyllysine; alternate is present on K71. N6-succinyllysine; alternate is present on K71. Position 195 is an N6-succinyllysine (K195). Residue F214–S223 coordinates FAD. The residue at position 237 (C237) is an S-nitrosocysteine. K239 carries the post-translational modification N6-acetyllysine; alternate. N6-succinyllysine; alternate is present on K239. W249–S251 is an FAD binding site. N6-acetyllysine; alternate occurs at positions 276 and 278. An N6-succinyllysine; alternate mark is found at K276 and K278. Residue K298 is modified to N6-acetyllysine. Residue K331 is modified to N6-acetyllysine; alternate. K331 carries the N6-succinyllysine; alternate modification. An N6-succinyllysine modification is found at K372. F461 to G463 contacts substrate. Catalysis depends on E462, which acts as the Proton acceptor. T464–D466 contributes to the FAD binding site. K482 carries the post-translational modification N6-acetyllysine; alternate. An N6-succinyllysine; alternate modification is found at K482. The segment at E483 to G516 is membrane-anchoring. Phosphoserine occurs at positions 517 and 522. An N6-acetyllysine modification is found at K550. K556 is subject to N6-acetyllysine; alternate. K556 carries the post-translational modification N6-succinyllysine; alternate. Q562 contacts FAD. The residue at position 639 (K639) is an N6-succinyllysine.

It belongs to the acyl-CoA dehydrogenase family. Homodimer. Homodimerizes after import into the mitochondrion. FAD serves as cofactor. Post-translationally, S-nitrosylation at Cys-237 in liver improves catalytic efficiency.

It is found in the mitochondrion inner membrane. It carries out the reaction a very-long-chain 2,3-saturated fatty acyl-CoA + oxidized [electron-transfer flavoprotein] + H(+) = a very-long-chain (2E)-enoyl-CoA + reduced [electron-transfer flavoprotein]. It catalyses the reaction dodecanoyl-CoA + oxidized [electron-transfer flavoprotein] + H(+) = (2E)-dodecenoyl-CoA + reduced [electron-transfer flavoprotein]. The enzyme catalyses tetradecanoyl-CoA + oxidized [electron-transfer flavoprotein] + H(+) = (2E)-tetradecenoyl-CoA + reduced [electron-transfer flavoprotein]. The catalysed reaction is oxidized [electron-transfer flavoprotein] + hexadecanoyl-CoA + H(+) = (2E)-hexadecenoyl-CoA + reduced [electron-transfer flavoprotein]. It carries out the reaction octadecanoyl-CoA + oxidized [electron-transfer flavoprotein] + H(+) = (2E)-octadecenoyl-CoA + reduced [electron-transfer flavoprotein]. It catalyses the reaction eicosanoyl-CoA + oxidized [electron-transfer flavoprotein] + H(+) = (2E)-eicosenoyl-CoA + reduced [electron-transfer flavoprotein]. The enzyme catalyses docosanoyl-CoA + oxidized [electron-transfer flavoprotein] + H(+) = (2E)-docosenoyl-CoA + reduced [electron-transfer flavoprotein]. The catalysed reaction is tetracosanoyl-CoA + oxidized [electron-transfer flavoprotein] + H(+) = (2E)-tetracosenoyl-CoA + reduced [electron-transfer flavoprotein]. It participates in lipid metabolism; mitochondrial fatty acid beta-oxidation. Its function is as follows. Very long-chain specific acyl-CoA dehydrogenase is one of the acyl-CoA dehydrogenases that catalyze the first step of mitochondrial fatty acid beta-oxidation, an aerobic process breaking down fatty acids into acetyl-CoA and allowing the production of energy from fats. The first step of fatty acid beta-oxidation consists in the removal of one hydrogen from C-2 and C-3 of the straight-chain fatty acyl-CoA thioester, resulting in the formation of trans-2-enoyl-CoA. Among the different mitochondrial acyl-CoA dehydrogenases, very long-chain specific acyl-CoA dehydrogenase acts specifically on acyl-CoAs with saturated 12 to 24 carbons long primary chains. This Bos taurus (Bovine) protein is Very long-chain specific acyl-CoA dehydrogenase, mitochondrial.